The primary structure comprises 164 residues: Endoribonuclease YbeY (164 aa).

Zn(2+) is bound by residues His117, His121, and His127.

The protein belongs to the endoribonuclease YbeY family. Zn(2+) serves as cofactor.

The protein localises to the cytoplasm. Its function is as follows. Single strand-specific metallo-endoribonuclease involved in late-stage 70S ribosome quality control and in maturation of the 3' terminus of the 16S rRNA. The protein is Endoribonuclease YbeY of Mycoplasma mycoides subsp. mycoides SC (strain CCUG 32753 / NCTC 10114 / PG1).